Consider the following 92-residue polypeptide: Small ribosomal subunit protein uS19c (92 aa).

This sequence belongs to the universal ribosomal protein uS19 family.

It localises to the plastid. It is found in the chloroplast. Protein S19 forms a complex with S13 that binds strongly to the 16S ribosomal RNA. The polypeptide is Small ribosomal subunit protein uS19c (Ceratophyllum demersum (Rigid hornwort)).